The following is a 252-amino-acid chain: tRNA (guanine-N(1)-)-methyltransferase (252 aa).

Residues G118 and 138 to 143 (IGDYVL) contribute to the S-adenosyl-L-methionine site.

This sequence belongs to the RNA methyltransferase TrmD family. Homodimer.

The protein localises to the cytoplasm. It carries out the reaction guanosine(37) in tRNA + S-adenosyl-L-methionine = N(1)-methylguanosine(37) in tRNA + S-adenosyl-L-homocysteine + H(+). Its function is as follows. Specifically methylates guanosine-37 in various tRNAs. In Pseudomonas paraeruginosa (strain DSM 24068 / PA7) (Pseudomonas aeruginosa (strain PA7)), this protein is tRNA (guanine-N(1)-)-methyltransferase.